Reading from the N-terminus, the 154-residue chain is uncharacterized protein (154 aa).

The next 2 membrane-spanning stretches (helical) occupy residues 54–74 and 81–101; these read FLITNLIFFFAAFVALLIYLL and FAFVFIAAIIFIIFYNIFFLS.

It is found in the cell membrane. This is an uncharacterized protein from Mycoplasma genitalium (strain ATCC 33530 / DSM 19775 / NCTC 10195 / G37) (Mycoplasmoides genitalium).